We begin with the raw amino-acid sequence, 210 residues long: Acetoin utilization protein AcuA (210 aa).

An N-acetyltransferase domain is found at 20 to 161 (LIEGPVSPED…YRKIMEKMMN (142 aa)).

This sequence belongs to the acetyltransferase family. Monomer.

Its pathway is ketone degradation; acetoin degradation. Its activity is regulated as follows. Activity is sensitive to salt concentration, a high concentration of KCL (500 mM) is needed for complete inactivation. In terms of biological role, part of the acuABC operon, which is possibly involved in the breakdown of acetoin and butanediol. Acts as an acetyltransferase inactivating acetyl-CoA synthetase AcsA via acetylation at a Lys residue. This is Acetoin utilization protein AcuA (acuA) from Bacillus subtilis (strain 168).